Consider the following 350-residue polypeptide: Heat-inducible transcription repressor HrcA (350 aa).

The protein belongs to the HrcA family.

Its function is as follows. Negative regulator of class I heat shock genes (grpE-dnaK-dnaJ and groELS operons). Prevents heat-shock induction of these operons. This Limosilactobacillus reuteri (strain DSM 20016) (Lactobacillus reuteri) protein is Heat-inducible transcription repressor HrcA.